A 605-amino-acid chain; its full sequence is FAD-linked oxidoreductase easE (605 aa).

The first 20 residues, 1 to 20 (MRHFVTFVVGFLLSWGFLSS), serve as a signal peptide directing secretion. Residues N46 and N105 are each glycosylated (N-linked (GlcNAc...) asparagine). The FAD-binding PCMH-type domain maps to 122 to 307 (CHQGRLPLYS…TQATVRAFPD (186 aa)). N-linked (GlcNAc...) asparagine glycosylation is present at N370.

This sequence belongs to the oxygen-dependent FAD-linked oxidoreductase family. The cofactor is FAD.

The protein operates within alkaloid biosynthesis; ergot alkaloid biosynthesis. In terms of biological role, FAD-linked oxidoreductase; part of the gene cluster that mediates the biosynthesis of fungal ergot alkaloid ergovaline, the predominant ergopeptine product in E.festucae var. lolii. DmaW catalyzes the first step of ergot alkaloid biosynthesis by condensing dimethylallyl diphosphate (DMAP) and tryptophan to form 4-dimethylallyl-L-tryptophan. The second step is catalyzed by the methyltransferase easF that methylates 4-dimethylallyl-L-tryptophan in the presence of S-adenosyl-L-methionine, resulting in the formation of 4-dimethylallyl-L-abrine. The catalase easC and the FAD-dependent oxidoreductase easE then transform 4-dimethylallyl-L-abrine to chanoclavine-I which is further oxidized by easD in the presence of NAD(+), resulting in the formation of chanoclavine-I aldehyde. Agroclavine dehydrogenase easG then mediates the conversion of chanoclavine-I aldehyde to agroclavine via a non-enzymatic adduct reaction: the substrate is an iminium intermediate that is formed spontaneously from chanoclavine-I aldehyde in the presence of glutathione. The presence of easA is not required to complete this reaction. Further conversion of agroclavine to paspalic acid is a two-step process involving oxidation of agroclavine to elymoclavine and of elymoclavine to paspalic acid, the second step being performed by the elymoclavine oxidase cloA. Paspalic acid is then further converted to D-lysergic acid. Ergovaline is assembled from D-lysergic acid and three different amino acids by the D-lysergyl-peptide-synthetase composed of a monomudular (lpsB) and a trimodular (lpsA) nonribosomal peptide synthetase subunit. The protein is FAD-linked oxidoreductase easE of Epichloe festucae var. lolii (Neotyphodium lolii).